We begin with the raw amino-acid sequence, 136 residues long: Small ribosomal subunit protein uS19 (136 aa).

Belongs to the universal ribosomal protein uS19 family.

Its function is as follows. Protein S19 forms a complex with S13 that binds strongly to the 16S ribosomal RNA. This Methanothrix thermoacetophila (strain DSM 6194 / JCM 14653 / NBRC 101360 / PT) (Methanosaeta thermophila) protein is Small ribosomal subunit protein uS19.